A 106-amino-acid chain; its full sequence is Protein yippee-like At4g27745 (106 aa).

In terms of domain architecture, Yippee spans 8-105 (RLYSCCNCRN…FEKAKIVKED (98 aa)). Cysteine 12, cysteine 15, cysteine 68, and cysteine 71 together coordinate Zn(2+).

This sequence belongs to the yippee family.

The chain is Protein yippee-like At4g27745 from Arabidopsis thaliana (Mouse-ear cress).